Reading from the N-terminus, the 409-residue chain is Pyrophosphate--fructose 6-phosphate 1-phosphotransferase (409 aa).

G14 serves as a coordination point for diphosphate. Position 123 (D123) interacts with Mg(2+). Residues T151 to D153, M196 to R198, E268, and Y325 to R328 each bind substrate. The active-site Proton acceptor is the D153.

Belongs to the phosphofructokinase type A (PFKA) family. PPi-dependent PFK group II subfamily. Clade 'P' sub-subfamily. In terms of assembly, homotetramer. Mg(2+) serves as cofactor.

Its subcellular location is the cytoplasm. It catalyses the reaction beta-D-fructose 6-phosphate + diphosphate = beta-D-fructose 1,6-bisphosphate + phosphate + H(+). It functions in the pathway carbohydrate degradation; glycolysis; D-glyceraldehyde 3-phosphate and glycerone phosphate from D-glucose: step 3/4. Its activity is regulated as follows. Non-allosteric. In terms of biological role, catalyzes the phosphorylation of D-fructose 6-phosphate, the first committing step of glycolysis. Uses inorganic phosphate (PPi) as phosphoryl donor instead of ATP like common ATP-dependent phosphofructokinases (ATP-PFKs), which renders the reaction reversible, and can thus function both in glycolysis and gluconeogenesis. Consistently, PPi-PFK can replace the enzymes of both the forward (ATP-PFK) and reverse (fructose-bisphosphatase (FBPase)) reactions. The chain is Pyrophosphate--fructose 6-phosphate 1-phosphotransferase from Methylotuvimicrobium alcaliphilum (strain DSM 19304 / NCIMB 14124 / VKM B-2133 / 20Z) (Methylomicrobium alcaliphilum).